A 123-amino-acid polypeptide reads, in one-letter code: Ferredoxin-5 (123 aa).

The 2Fe-2S ferredoxin-type domain maps to 2 to 119 (PNITFTSPIM…DVMVHFTGTP (118 aa)). 4 residues coordinate [2Fe-2S] cluster: Cys-42, Cys-47, Cys-50, and Cys-102.

This sequence belongs to the 2Fe2S plant-type ferredoxin family. It depends on [2Fe-2S] cluster as a cofactor.

Its function is as follows. Ferredoxins are iron-sulfur proteins that transfer electrons in a wide variety of metabolic reactions. This ferredoxin probably participates in nitrogen fixation. This Rhodobacter capsulatus (Rhodopseudomonas capsulata) protein is Ferredoxin-5 (fdxD).